The primary structure comprises 292 residues: S-adenosyl-L-methionine-dependent Diels-Alderase iccD (292 aa).

The chain crosses the membrane as a helical span at residues 240–262 (LPVVRMFYVVLLVPYLFVRLLGI).

It belongs to the class I-like SAM-binding methyltransferase superfamily. Erg6/SMT family. The cofactor is S-adenosyl-L-methionine.

The protein localises to the membrane. The enzyme catalyses 3-[(2E,4E,8S,10E,12Z)-4,8-dimethyltetradeca-2,4,10,12-tetraenoyl]-4-hydroxy-5-(4-hydroxyphenyl)-1,2-dihydropyridin-2-one = 8-epi-ilicicolin H. Its pathway is mycotoxin biosynthesis. Functionally, S-adenosyl-l-methionine-dependent Diels-Alderase; part of the gene cluster that mediates the biosynthesis of ilicicolin H, a 4-hydroxy-2-pyridonealkaloid that has potent and broad antifungal activities by inhibiting the mitochondrial respiration chain. IccD catalyzes the Diels-Alder reaction that converts the acyclic 2-pyridone intermediate to 8-epi-ilicicolin H. The biosynthesis of ilicicolin H starts with formation of the tetramic acid by the hybrid PKS-NRPS synthetase iccA with the partnering trans-enoyl reductase iccB since iccA lacks a designated enoylreductase (ER) domain. The cytochrome P450 monooxygenase iccC then catalyzes the ring expansion of the tetramate to the acyclic 2-pyridone. The pericyclase iccD further converts the acyclic 2-pyridone into 8-epi-ilicicolin H. Finally, the epimerase iccE converts 8-epi-ilicicolin H into ilicicolin H via epimerization. IccA to iccE are sufficient for ilicicolin H biosynthesis and the roles of the remaining enzymes, iccF, iccG and iccH within the pathway have still to be determined. The chain is S-adenosyl-L-methionine-dependent Diels-Alderase iccD from Talaromyces variabilis (Penicillium variabile).